The chain runs to 248 residues: tRNA (guanine-N(1)-)-methyltransferase (248 aa).

Residues Gly113 and 133-138 (IGDYVL) each bind S-adenosyl-L-methionine.

This sequence belongs to the RNA methyltransferase TrmD family. In terms of assembly, homodimer.

The protein localises to the cytoplasm. The catalysed reaction is guanosine(37) in tRNA + S-adenosyl-L-methionine = N(1)-methylguanosine(37) in tRNA + S-adenosyl-L-homocysteine + H(+). Its function is as follows. Specifically methylates guanosine-37 in various tRNAs. This chain is tRNA (guanine-N(1)-)-methyltransferase, found in Shewanella piezotolerans (strain WP3 / JCM 13877).